The following is a 203-amino-acid chain: Large ribosomal subunit protein bL25 (203 aa).

This sequence belongs to the bacterial ribosomal protein bL25 family. CTC subfamily. As to quaternary structure, part of the 50S ribosomal subunit; part of the 5S rRNA/L5/L18/L25 subcomplex. Contacts the 5S rRNA. Binds to the 5S rRNA independently of L5 and L18.

Its function is as follows. This is one of the proteins that binds to the 5S RNA in the ribosome where it forms part of the central protuberance. The polypeptide is Large ribosomal subunit protein bL25 (Cellvibrio japonicus (strain Ueda107) (Pseudomonas fluorescens subsp. cellulosa)).